A 144-amino-acid chain; its full sequence is Large ribosomal subunit protein uL16 (144 aa).

It belongs to the universal ribosomal protein uL16 family. As to quaternary structure, part of the 50S ribosomal subunit.

Its function is as follows. Binds 23S rRNA and is also seen to make contacts with the A and possibly P site tRNAs. The chain is Large ribosomal subunit protein uL16 from Clostridium perfringens (strain ATCC 13124 / DSM 756 / JCM 1290 / NCIMB 6125 / NCTC 8237 / Type A).